A 146-amino-acid chain; its full sequence is Ribonuclease P protein component (146 aa).

This sequence belongs to the RnpA family. As to quaternary structure, consists of a catalytic RNA component (M1 or rnpB) and a protein subunit.

The catalysed reaction is Endonucleolytic cleavage of RNA, removing 5'-extranucleotides from tRNA precursor.. Functionally, RNaseP catalyzes the removal of the 5'-leader sequence from pre-tRNA to produce the mature 5'-terminus. It can also cleave other RNA substrates such as 4.5S RNA. The protein component plays an auxiliary but essential role in vivo by binding to the 5'-leader sequence and broadening the substrate specificity of the ribozyme. In Chlorobium phaeobacteroides (strain DSM 266 / SMG 266 / 2430), this protein is Ribonuclease P protein component.